A 96-amino-acid polypeptide reads, in one-letter code: Large ribosomal subunit protein bL21 (96 aa).

It belongs to the bacterial ribosomal protein bL21 family. As to quaternary structure, part of the 50S ribosomal subunit. Contacts protein L20.

Its function is as follows. This protein binds to 23S rRNA in the presence of protein L20. The sequence is that of Large ribosomal subunit protein bL21 from Hydrogenobaculum sp. (strain Y04AAS1).